A 363-amino-acid chain; its full sequence is SWIRM domain-containing protein YOR338W (363 aa).

Disordered stretches follow at residues 1 to 22 and 186 to 208; these read MLDN…GGIN and LYED…VPVR. The span at 186-196 shows a compositional bias: basic and acidic residues; it reads LYEDDGNRSEN. The 98-residue stretch at 266 to 363 folds into the SWIRM domain; that stretch reads LKVEWKGSPM…LQDKHFEKYL (98 aa).

This is SWIRM domain-containing protein YOR338W from Saccharomyces cerevisiae (strain ATCC 204508 / S288c) (Baker's yeast).